We begin with the raw amino-acid sequence, 400 residues long: Peptidase M20 domain-containing protein C757.05c (400 aa).

Residues 1–25 (MTMKISVWSLLIVIGYHLWMSPVLA) form the signal peptide. Asn80 is a glycosylation site (N-linked (GlcNAc...) asparagine). Asp152 contributes to the Zn(2+) binding site. Glu186 serves as the catalytic Proton acceptor. Zn(2+) is bound at residue Glu187.

It belongs to the peptidase M20A family. Zn(2+) serves as cofactor.

The protein resides in the secreted. This chain is Peptidase M20 domain-containing protein C757.05c, found in Schizosaccharomyces pombe (strain 972 / ATCC 24843) (Fission yeast).